The primary structure comprises 513 residues: Cytochrome P450 1A2 (513 aa).

A glycan (O-linked (GlcNAc) serine) is linked at S68. Position 456 (C456) interacts with heme.

It belongs to the cytochrome P450 family. As to quaternary structure, interacts with PGRMC1; the interaction requires PGRMC1 homodimerization. It depends on heme as a cofactor.

It localises to the endoplasmic reticulum membrane. The protein resides in the microsome membrane. It catalyses the reaction an organic molecule + reduced [NADPH--hemoprotein reductase] + O2 = an alcohol + oxidized [NADPH--hemoprotein reductase] + H2O + H(+). The enzyme catalyses 17beta-estradiol + reduced [NADPH--hemoprotein reductase] + O2 = 2-hydroxy-17beta-estradiol + oxidized [NADPH--hemoprotein reductase] + H2O + H(+). It carries out the reaction 17beta-estradiol + reduced [NADPH--hemoprotein reductase] + O2 = 4-hydroxy-17beta-estradiol + oxidized [NADPH--hemoprotein reductase] + H2O + H(+). The catalysed reaction is estrone + reduced [NADPH--hemoprotein reductase] + O2 = 2-hydroxyestrone + oxidized [NADPH--hemoprotein reductase] + H2O + H(+). It catalyses the reaction estrone + reduced [NADPH--hemoprotein reductase] + O2 = 4-hydroxyestrone + oxidized [NADPH--hemoprotein reductase] + H2O + H(+). The enzyme catalyses cholesterol + reduced [NADPH--hemoprotein reductase] + O2 = 25-hydroxycholesterol + oxidized [NADPH--hemoprotein reductase] + H2O + H(+). It carries out the reaction all-trans-retinol + reduced [NADPH--hemoprotein reductase] + O2 = all-trans-retinal + oxidized [NADPH--hemoprotein reductase] + 2 H2O + H(+). The catalysed reaction is all-trans-retinal + reduced [NADPH--hemoprotein reductase] + O2 = all-trans-retinoate + oxidized [NADPH--hemoprotein reductase] + H2O + 2 H(+). It catalyses the reaction (5Z,8Z,11Z,14Z)-eicosatetraenoate + reduced [NADPH--hemoprotein reductase] + O2 = (14R,15S)-epoxy-(5Z,8Z,11Z)-eicosatrienoate + oxidized [NADPH--hemoprotein reductase] + H2O + H(+). The enzyme catalyses (5Z,8Z,11Z,14Z)-eicosatetraenoate + reduced [NADPH--hemoprotein reductase] + O2 = (14S,15R)-epoxy-(5Z,8Z,11Z)-eicosatrienoate + oxidized [NADPH--hemoprotein reductase] + H2O + H(+). It carries out the reaction (5Z,8Z,11Z,14Z,17Z)-eicosapentaenoate + reduced [NADPH--hemoprotein reductase] + O2 = (17R,18S)-epoxy-(5Z,8Z,11Z,14Z)-eicosatetraenoate + oxidized [NADPH--hemoprotein reductase] + H2O + H(+). The catalysed reaction is (4Z,7Z,10Z,13Z,16Z,19Z)-docosahexaenoate + reduced [NADPH--hemoprotein reductase] + O2 = (19R,20S)-epoxy-(4Z,7Z,10Z,13Z,16Z)-docosapentaenoate + oxidized [NADPH--hemoprotein reductase] + H2O + H(+). It catalyses the reaction (5S)-hydroperoxy-(6E,8Z,11Z,14Z)-eicosatetraenoate = 5-oxo-(6E,8Z,11Z,14Z)-eicosatetraenoate + H2O. The enzyme catalyses (12S)-hydroperoxy-(5Z,8Z,10E,14Z)-eicosatetraenoate = 12-oxo-(5Z,8Z,10E,14Z)-eicosatetraenoate + H2O. It carries out the reaction (15S)-hydroperoxy-(5Z,8Z,11Z,13E)-eicosatetraenoate = 15-oxo-(5Z,8Z,11Z,13E)-eicosatetraenoate + H2O. The catalysed reaction is (13S)-hydroperoxy-(9Z,11E)-octadecadienoate = 13-oxo-(9Z,11E)-octadecadienoate + H2O. It catalyses the reaction (5Z,8Z,11Z,14Z)-eicosatetraenoate + reduced [NADPH--hemoprotein reductase] + O2 = 13-hydroxy-(5Z,8Z,11Z,14Z)-eicosatetraenoate + oxidized [NADPH--hemoprotein reductase] + H2O + H(+). The enzyme catalyses (5Z,8Z,11Z,14Z)-eicosatetraenoate + reduced [NADPH--hemoprotein reductase] + O2 = 19-hydroxy-(5Z,8Z,11Z,14Z)-eicosatetraenoate + oxidized [NADPH--hemoprotein reductase] + H2O + H(+). It carries out the reaction (9Z,12Z)-octadecadienoate + reduced [NADPH--hemoprotein reductase] + O2 = 11-hydroxy-(9Z,12Z)-octadecadienoate + oxidized [NADPH--hemoprotein reductase] + H2O + H(+). It participates in cofactor metabolism; retinol metabolism. The protein operates within steroid metabolism; cholesterol metabolism. Its pathway is lipid metabolism; arachidonate metabolism. Functionally, a cytochrome P450 monooxygenase involved in the metabolism of various endogenous substrates, including fatty acids, steroid hormones and vitamins. Mechanistically, uses molecular oxygen inserting one oxygen atom into a substrate, and reducing the second into a water molecule, with two electrons provided by NADPH via cytochrome P450 reductase (NADPH--hemoprotein reductase). Catalyzes the hydroxylation of carbon-hydrogen bonds. Exhibits high catalytic activity for the formation of hydroxyestrogens from estrone (E1) and 17beta-estradiol (E2), namely 2-hydroxy E1 and E2. Metabolizes cholesterol toward 25-hydroxycholesterol, a physiological regulator of cellular cholesterol homeostasis. May act as a major enzyme for all-trans retinoic acid biosynthesis in the liver. Catalyzes two successive oxidative transformation of all-trans retinol to all-trans retinal and then to the active form all-trans retinoic acid. Primarily catalyzes stereoselective epoxidation of the last double bond of polyunsaturated fatty acids (PUFA), displaying a strong preference for the (R,S) stereoisomer. Catalyzes bisallylic hydroxylation and omega-1 hydroxylation of PUFA. May also participate in eicosanoids metabolism by converting hydroperoxide species into oxo metabolites (lipoxygenase-like reaction, NADPH-independent). Plays a role in the oxidative metabolism of xenobiotics. Catalyzes the N-hydroxylation of heterocyclic amines and the O-deethylation of phenacetin. Metabolizes caffeine via N3-demethylation. The polypeptide is Cytochrome P450 1A2 (Cyp1a2) (Rattus norvegicus (Rat)).